A 158-amino-acid polypeptide reads, in one-letter code: Transcriptional repressor NrdR (158 aa).

A zinc finger spans residues 3–34 (CPSCQNTDSRVLESRAADAGRSVRRRRECLHC). The ATP-cone domain occupies 49 to 139 (ITVLKRNGNR…VYRHFRGIND (91 aa)).

Belongs to the NrdR family. Zn(2+) is required as a cofactor.

In terms of biological role, negatively regulates transcription of bacterial ribonucleotide reductase nrd genes and operons by binding to NrdR-boxes. The chain is Transcriptional repressor NrdR from Prochlorococcus marinus (strain MIT 9303).